The chain runs to 491 residues: N-succinylglutamate 5-semialdehyde dehydrogenase (491 aa).

223-228 (GSANTG) is a binding site for NAD(+). Residues Glu246 and Cys280 contribute to the active site.

Belongs to the aldehyde dehydrogenase family. AstD subfamily.

It catalyses the reaction N-succinyl-L-glutamate 5-semialdehyde + NAD(+) + H2O = N-succinyl-L-glutamate + NADH + 2 H(+). The protein operates within amino-acid degradation; L-arginine degradation via AST pathway; L-glutamate and succinate from L-arginine: step 4/5. Catalyzes the NAD-dependent reduction of succinylglutamate semialdehyde into succinylglutamate. The sequence is that of N-succinylglutamate 5-semialdehyde dehydrogenase from Photorhabdus laumondii subsp. laumondii (strain DSM 15139 / CIP 105565 / TT01) (Photorhabdus luminescens subsp. laumondii).